Here is a 282-residue protein sequence, read N- to C-terminus: Orotidine 5'-phosphate decarboxylase (282 aa).

Catalysis depends on K95, which acts as the Proton donor.

The protein belongs to the OMP decarboxylase family. Type 2 subfamily.

The catalysed reaction is orotidine 5'-phosphate + H(+) = UMP + CO2. The protein operates within pyrimidine metabolism; UMP biosynthesis via de novo pathway; UMP from orotate: step 2/2. This is Orotidine 5'-phosphate decarboxylase from Polaromonas naphthalenivorans (strain CJ2).